A 345-amino-acid polypeptide reads, in one-letter code: Alkaline phosphatase isozyme conversion protein (345 aa).

A signal peptide spans 1 to 24 (MFSALRHRTAALALGVCFILPVHA). Histidine 117, aspartate 143, glutamate 176, and aspartate 204 together coordinate Zn(2+).

This sequence belongs to the peptidase M28 family. M28C subfamily.

This protein, presumably an aminopeptidase, mediates the conversion of E.coli alkaline phosphatase isozyme 1, to isozymes 2 and 3 by removing, one by one, the two N-terminal arginine residues. In Escherichia coli (strain K12), this protein is Alkaline phosphatase isozyme conversion protein (iap).